Here is a 163-residue protein sequence, read N- to C-terminus: Small ribosomal subunit protein uS5 (163 aa).

An S5 DRBM domain is found at 8–71 (LIEKIVDLNR…ERAKKGMVQV (64 aa)).

This sequence belongs to the universal ribosomal protein uS5 family. In terms of assembly, part of the 30S ribosomal subunit. Contacts proteins S4 and S8.

In terms of biological role, with S4 and S12 plays an important role in translational accuracy. Located at the back of the 30S subunit body where it stabilizes the conformation of the head with respect to the body. The chain is Small ribosomal subunit protein uS5 from Oleidesulfovibrio alaskensis (strain ATCC BAA-1058 / DSM 17464 / G20) (Desulfovibrio alaskensis).